A 170-amino-acid polypeptide reads, in one-letter code: Adenine phosphoribosyltransferase (170 aa).

This sequence belongs to the purine/pyrimidine phosphoribosyltransferase family. In terms of assembly, homodimer.

The protein resides in the cytoplasm. The catalysed reaction is AMP + diphosphate = 5-phospho-alpha-D-ribose 1-diphosphate + adenine. It participates in purine metabolism; AMP biosynthesis via salvage pathway; AMP from adenine: step 1/1. Catalyzes a salvage reaction resulting in the formation of AMP, that is energically less costly than de novo synthesis. The polypeptide is Adenine phosphoribosyltransferase (Acholeplasma laidlawii (strain PG-8A)).